The chain runs to 328 residues: Ribosomal RNA large subunit methyltransferase F (328 aa).

The segment at 1–31 (MTDTRKPPRKKPQRPAKPAAPREKATLHPRN) is disordered.

It belongs to the methyltransferase superfamily. METTL16/RlmF family.

Its subcellular location is the cytoplasm. The catalysed reaction is adenosine(1618) in 23S rRNA + S-adenosyl-L-methionine = N(6)-methyladenosine(1618) in 23S rRNA + S-adenosyl-L-homocysteine + H(+). Functionally, specifically methylates the adenine in position 1618 of 23S rRNA. This Pseudomonas savastanoi pv. phaseolicola (strain 1448A / Race 6) (Pseudomonas syringae pv. phaseolicola (strain 1448A / Race 6)) protein is Ribosomal RNA large subunit methyltransferase F.